A 163-amino-acid polypeptide reads, in one-letter code: Bacterial microcompartment assembly protein PduM (163 aa).

Belongs to the PduM family. As to quaternary structure, interacts with shell protein PduK.

The protein localises to the bacterial microcompartment. It participates in polyol metabolism; 1,2-propanediol degradation. Its function is as follows. Plays an essential role in assembly and/or stability of the bacterial microcompartment (BMC) dedicated to 1,2-propanediol (1,2-PD) degradation. Overexpression impairs BMC formation. The 1,2-PD-specific bacterial microcompartment (BMC) concentrates low levels of 1,2-PD catabolic enzymes, concentrates volatile reaction intermediates thus enhancing pathway flux and keeps the level of toxic, mutagenic propionaldehyde low. This is Bacterial microcompartment assembly protein PduM from Salmonella typhimurium (strain LT2 / SGSC1412 / ATCC 700720).